A 71-amino-acid chain; its full sequence is Protein CYSTEINE-RICH TRANSMEMBRANE MODULE 8 (71 aa).

Positions 1-22 (MNQSAQNYFSVQKPSETSSGPY) are enriched in polar residues. The segment at 1 to 35 (MNQSAQNYFSVQKPSETSSGPYTSPPPIGYPTRDA) is disordered. A helical transmembrane segment spans residues 48 to 64 (NSKGVNPEGCCAAICCC).

Belongs to the CYSTM1 family. As to expression, mostly expressed in stems, siliques, roots and flowers and, to a lower extent, in leaves.

The protein resides in the membrane. It localises to the nucleus. Functionally, involved in resistance to abiotic stress. The protein is Protein CYSTEINE-RICH TRANSMEMBRANE MODULE 8 of Arabidopsis thaliana (Mouse-ear cress).